The following is an 85-amino-acid chain: Turmerin (85 aa).

The N-terminus is blocked.

Functionally, inhibition of trypsin. Has anticarcinogenic activity, prevents transformation of DMBA-treated JB6 cells. Has antipromoter activity, prevents promotion by tetradecanoyl phorbal acetate (TPA) in JB6 cells. Prevents tertiary butyl hydroperoxide-induced mutagenesis. Protects AT base pairs and shows antimutagenesis activity in TA102 and TA104 S.typhimurium mutagenesis tests. Inhibits paw edema formation induced by phospholipase A2 in Swiss Wistar mice. Prevents the release of arachidonate, the parent compound for the synthesis of prostaglandins and prostacyclins. Has antimalarial activity, kills P.falciparum. Has antivenom activity, nullifies the lethal effects of N.naja venom and inhibits phospholipase A2 present in N.naja venom. Has antifungal activity, inhibits cilia formation by A.niger. Is not toxic or allergenic. The sequence is that of Turmerin from Curcuma longa (Turmeric).